Here is a 205-residue protein sequence, read N- to C-terminus: uncharacterized protein (205 aa).

Residues 10–75 (QDLLSAVDQQ…AANLMTVMTD (66 aa)) adopt a coiled-coil conformation. The segment at 111–138 (PLSNTNNEQTSPPASGKTSETPKKNPTN) is disordered. Positions 112–138 (LSNTNNEQTSPPASGKTSETPKKNPTN) are enriched in polar residues.

This sequence belongs to the asfivirus K205R family.

Its subcellular location is the host cytoplasm. Its function is as follows. Induces host endoplasmic reticulum stress and consequently activates autophagy and NF-kappa-B signaling pathway. In turn, may induce autophagy-mediated STING1 degradation and innate immune evasion. This is an uncharacterized protein from Ornithodoros (relapsing fever ticks).